We begin with the raw amino-acid sequence, 431 residues long: Forkhead box protein N2 (431 aa).

A DNA-binding region (fork-head) is located at residues 112-208 (KPPYSFSLLI…QALKKQPFSS (97 aa)). Residues 364–387 (DSGYASQPCAKISEKGQSGKKMRK) form a disordered region.

It localises to the nucleus. Binds to the purine-rich region in HTLV-I LTR. This Homo sapiens (Human) protein is Forkhead box protein N2 (FOXN2).